A 28-amino-acid chain; its full sequence is Dermaseptin-DI2 (28 aa).

Expressed by the skin glands.

The protein localises to the secreted. Functionally, has antibacterial activity against the Gram-positive bacteria S.aureus and E.faecalis, and the Gram-negative bacteria P.aeruginosa and E.coli. Has antiprotozoal activity against T.cruzi. Has antifungal activity against the yeasts C.tropicalis (MIC=10.9 uM), C.guilliermondii (MIC=21.8 uM), C.albicans (MIC=21.8 uM) and C.albicans ATCC 1023 (MIC=10.9 uM). Decreases viability of murine peritoneal cells. Fuses to, and disrupts liposomes. This is Dermaseptin-DI2 from Phyllomedusa distincta (Monkey frog).